The following is a 271-amino-acid chain: Methylcorrinoid:tetrahydrofolate methyltransferase (271 aa).

Residues 1 to 247 form the Pterin-binding domain; that stretch reads MIIIGEKLNG…GAIFATDALL (247 aa).

Belongs to the vitamin-B12 dependent methionine synthase family. In terms of assembly, the proline betaine:THF methyl transfer system is composed of two methyltransferases, MtpB and MtqA, and the corrinoid protein MtqC. The L-carnitine:THF methyl transfer system is composed of two methyltransferases, MtcB and MtqA, and the corrinoid protein MtqC.

The enzyme catalyses methyl-Co(III)-[quaternary-amine-specific corrinoid protein] + (6S)-5,6,7,8-tetrahydrofolate = Co(I)-[quaternary-amine-specific corrinoid protein] + (6S)-5-methyl-5,6,7,8-tetrahydrofolate + H(+). Functionally, involved in the degradation of the quaternary amines L-proline betaine and L-carnitine. Component of a corrinoid-dependent methyltransferase system that transfers a methyl group from L-proline betaine or L-carnitine to tetrahydrofolate (THF), forming methyl-THF, a key intermediate in the Wood-Ljungdahl acetogenesis pathway. MtqA catalyzes the transfer of a methyl group from the methylated corrinoid protein MtqC to THF, forming methyl-THF. This chain is Methylcorrinoid:tetrahydrofolate methyltransferase, found in Eubacterium limosum.